The following is a 453-amino-acid chain: UDP-glycosyltransferase 76E9 (453 aa).

Residues Ser279, 337-339 (APQ), 354-362 (HCGWNSTLE), and 376-379 (TTDQ) contribute to the UDP-alpha-D-glucose site.

The protein belongs to the UDP-glycosyltransferase family.

The polypeptide is UDP-glycosyltransferase 76E9 (UGT76E9) (Arabidopsis thaliana (Mouse-ear cress)).